A 475-amino-acid chain; its full sequence is Polyphosphate:AMP phosphotransferase (475 aa).

2 PPK2 regions span residues 18 to 222 and 256 to 472; these read LDLI…LTAL and ANYK…KADR.

The protein belongs to the polyphosphate kinase 2 (PPK2) family. Class II subfamily. As to quaternary structure, homodimer and homotetramer. Mg(2+) serves as cofactor.

It catalyses the reaction [phosphate](n) + ADP = [phosphate](n+1) + AMP. In terms of biological role, uses inorganic polyphosphate (polyP) as a donor to convert AMP to ADP. Can also use GMP, UMP, CMP, TMP or deoxyribonucleoside monophosphates, with lower efficiency. Cannot use low-molecular weight polyP as donors. Can also catalyze the synthesis of polyP from ADP or GDP, with lower efficiency. The polypeptide is Polyphosphate:AMP phosphotransferase (Acinetobacter johnsonii).